The following is a 267-amino-acid chain: Protein HesA, heterocyst (267 aa).

The protein belongs to the HesA/MoeB/ThiF family.

The polypeptide is Protein HesA, heterocyst (hesA1) (Trichormus variabilis (strain ATCC 29413 / PCC 7937) (Anabaena variabilis)).